Reading from the N-terminus, the 369-residue chain is S-(hydroxymethyl)glutathione dehydrogenase (369 aa).

Cysteine 40, histidine 62, cysteine 92, cysteine 95, cysteine 98, cysteine 106, and cysteine 169 together coordinate Zn(2+).

The protein belongs to the zinc-containing alcohol dehydrogenase family. Class-III subfamily. As to quaternary structure, homodimer. Zn(2+) is required as a cofactor.

It localises to the cytoplasm. The enzyme catalyses S-(hydroxymethyl)glutathione + NADP(+) = S-formylglutathione + NADPH + H(+). The catalysed reaction is S-(hydroxymethyl)glutathione + NAD(+) = S-formylglutathione + NADH + H(+). It catalyses the reaction a primary alcohol + NAD(+) = an aldehyde + NADH + H(+). It carries out the reaction a secondary alcohol + NAD(+) = a ketone + NADH + H(+). The enzyme catalyses S-nitrosoglutathione + NADH + H(+) = S-(hydroxysulfenamide)glutathione + NAD(+). Has high formaldehyde dehydrogenase activity in the presence of glutathione and catalyzes the oxidation of normal alcohols in a reaction that is not GSH-dependent. In addition, hemithiolacetals other than those formed from GSH, including omega-thiol fatty acids, also are substrates. Also acts as a S-nitroso-glutathione reductase by catalyzing the NADH-dependent reduction of S-nitrosoglutathione. The protein is S-(hydroxymethyl)glutathione dehydrogenase (frmA) of Escherichia coli O6:H1 (strain CFT073 / ATCC 700928 / UPEC).